We begin with the raw amino-acid sequence, 100 residues long: Large ribosomal subunit protein uL23c (100 aa).

Belongs to the universal ribosomal protein uL23 family. As to quaternary structure, part of the 50S ribosomal subunit.

Its subcellular location is the plastid. The protein resides in the chloroplast. Binds to 23S rRNA. The chain is Large ribosomal subunit protein uL23c (rpl23) from Euglena gracilis.